A 217-amino-acid polypeptide reads, in one-letter code: Octanoyltransferase (217 aa).

One can recognise a BPL/LPL catalytic domain in the interval 35–214 (DEAGERIWLL…TLPAFLDKLR (180 aa)). Residues 73–80 (RGGRYTYH), 145–147 (AIG), and 158–160 (GFS) contribute to the substrate site. Catalysis depends on C176, which acts as the Acyl-thioester intermediate.

Belongs to the LipB family.

Its subcellular location is the cytoplasm. The enzyme catalyses octanoyl-[ACP] + L-lysyl-[protein] = N(6)-octanoyl-L-lysyl-[protein] + holo-[ACP] + H(+). It functions in the pathway protein modification; protein lipoylation via endogenous pathway; protein N(6)-(lipoyl)lysine from octanoyl-[acyl-carrier-protein]: step 1/2. Functionally, catalyzes the transfer of endogenously produced octanoic acid from octanoyl-acyl-carrier-protein onto the lipoyl domains of lipoate-dependent enzymes. Lipoyl-ACP can also act as a substrate although octanoyl-ACP is likely to be the physiological substrate. The polypeptide is Octanoyltransferase (Sphingopyxis alaskensis (strain DSM 13593 / LMG 18877 / RB2256) (Sphingomonas alaskensis)).